A 64-amino-acid chain; its full sequence is Conotoxin Pn-B01122 (64 aa).

An N-terminal signal peptide occupies residues 1 to 22; the sequence is MRCLPVFVILLLLIASAPSVDA. Residues 23–48 constitute a propeptide that is removed on maturation; it reads RPKTKDDIPLVSFQDNAKRALQILSN.

It belongs to the conotoxin T superfamily. Contains 2 disulfide bonds that can be either 'C1-C3, C2-C4' or 'C1-C4, C2-C3', since these disulfide connectivities have been observed for conotoxins with cysteine framework V (for examples, see AC P0DQQ7 and AC P81755). As to expression, expressed by the venom duct.

The protein localises to the secreted. In Conus pennaceus (Feathered cone), this protein is Conotoxin Pn-B01122.